The chain runs to 506 residues: Radiation-sensitive protein 28 (506 aa).

WD repeat units follow at residues 55–94 (PLSI…HRND), 193–233 (HHKY…AVQD), 285–325 (RMQS…RLYS), 357–396 (AHLR…LQPE), and 404–451 (LGTQ…LWNK).

Its subcellular location is the nucleus. Involved in transcription-coupled repair nucleotide excision repair (NER) of UV-induced DNA lesions. In Saccharomyces cerevisiae (strain ATCC 204508 / S288c) (Baker's yeast), this protein is Radiation-sensitive protein 28 (RAD28).